Consider the following 92-residue polypeptide: MAKGQSLQDPFLNALRRERVPVSIYLVNGIKLQGQVESFDQFVILLKNTVSQMVYKHAISTVVPARPFNVSSHHNTPNQAAGYNASHDDSAE.

One can recognise a Sm domain in the interval 9–68; the sequence is DPFLNALRRERVPVSIYLVNGIKLQGQVESFDQFVILLKNTVSQMVYKHAISTVVPARPF. The segment at 68-92 is disordered; it reads FNVSSHHNTPNQAAGYNASHDDSAE. Positions 69–81 are enriched in polar residues; the sequence is NVSSHHNTPNQAA.

This sequence belongs to the Hfq family. As to quaternary structure, homohexamer.

RNA chaperone that binds small regulatory RNA (sRNAs) and mRNAs to facilitate mRNA translational regulation in response to envelope stress, environmental stress and changes in metabolite concentrations. Also binds with high specificity to tRNAs. The polypeptide is RNA-binding protein Hfq (Shewanella loihica (strain ATCC BAA-1088 / PV-4)).